The sequence spans 351 residues: Protein-glutamate methylesterase/protein-glutamine glutaminase (351 aa).

A Response regulatory domain is found at 6-123; the sequence is RVLVVDDSPT…ARPFGDLADK (118 aa). Asp57 bears the 4-aspartylphosphate mark. The CheB-type methylesterase domain occupies 154 to 346; that stretch reads YRAGRKVVAI…EEILKLTTAR (193 aa). Active-site residues include Ser166, His192, and Asp288.

The protein belongs to the CheB family. In terms of processing, phosphorylated by CheA. Phosphorylation of the N-terminal regulatory domain activates the methylesterase activity.

The protein localises to the cytoplasm. It carries out the reaction [protein]-L-glutamate 5-O-methyl ester + H2O = L-glutamyl-[protein] + methanol + H(+). The enzyme catalyses L-glutaminyl-[protein] + H2O = L-glutamyl-[protein] + NH4(+). In terms of biological role, involved in chemotaxis. Part of a chemotaxis signal transduction system that modulates chemotaxis in response to various stimuli. Catalyzes the demethylation of specific methylglutamate residues introduced into the chemoreceptors (methyl-accepting chemotaxis proteins or MCP) by CheR. Also mediates the irreversible deamidation of specific glutamine residues to glutamic acid. The chain is Protein-glutamate methylesterase/protein-glutamine glutaminase from Agrobacterium fabrum (strain C58 / ATCC 33970) (Agrobacterium tumefaciens (strain C58)).